The sequence spans 181 residues: MLASVALAALAGVGTPHATADDASPLVPLVDAAAQRLQTADPVAASKFRSGGAIDDPDREQQVIAAVTGDATRHNIDPGYVHDVFRNQIDATSSVEHTRFAQWKLDPAAAPSSAPDLSESRQKIDTLNRTMVDEIARQWPVLHSPVCRPDLDRALDAVATARGFDPVYRHALEYATHSYCR.

The N-terminal stretch at 1–20 (MLASVALAALAGVGTPHATA) is a signal peptide. One can recognise a Chorismate mutase domain in the interval 21-100 (DDASPLVPLV…ATSSVEHTRF (80 aa)). Residues Arg36, Lys47, Asp56, 59 to 63 (REQQV), 92 to 96 (TSSVE), and Arg121 each bind substrate. Residues Cys147 and Cys180 are joined by a disulfide bond.

In terms of assembly, homodimer.

Its subcellular location is the secreted. It catalyses the reaction chorismate = prephenate. The protein operates within metabolic intermediate biosynthesis; prephenate biosynthesis; prephenate from chorismate: step 1/1. In terms of biological role, catalyzes the Claisen rearrangement of chorismate to prephenate. May play some role in the pathogenicity. In Mycolicibacterium smegmatis (strain ATCC 700084 / mc(2)155) (Mycobacterium smegmatis), this protein is Secreted chorismate mutase.